A 332-amino-acid chain; its full sequence is Tryptophan--tRNA ligase (332 aa).

ATP is bound by residues 11-13 and 19-20; these read TST and GN. The short motif at 12-20 is the 'HIGH' region element; sequence STGKLTLGN. D140 is a binding site for L-tryptophan. Residues 152 to 154, I191, and 200 to 204 each bind ATP; these read GQD and KMSKS. The 'KMSKS' region signature appears at 200–204; that stretch reads KMSKS.

This sequence belongs to the class-I aminoacyl-tRNA synthetase family. As to quaternary structure, homodimer.

The protein localises to the cytoplasm. It carries out the reaction tRNA(Trp) + L-tryptophan + ATP = L-tryptophyl-tRNA(Trp) + AMP + diphosphate + H(+). Functionally, catalyzes the attachment of tryptophan to tRNA(Trp). This Mycoplasmopsis pulmonis (strain UAB CTIP) (Mycoplasma pulmonis) protein is Tryptophan--tRNA ligase.